The sequence spans 1260 residues: Methionine synthase (1260 aa).

Positions 13–333 (FGIIRKILSE…DHIRAFCNAI (321 aa)) constitute a Hcy-binding domain. Zn(2+) contacts are provided by cysteine 255, cysteine 318, and cysteine 319. The Pterin-binding domain maps to 364–625 (FVNVGERCNV…IPKDLLKLVE (262 aa)). Residues 655–749 (EVEEWRNKPV…FMEEEKRLKR (95 aa)) form the B12-binding N-terminal domain. Residues glutamate 699, 775–779 (GDVHD), histidine 778, serine 823, threonine 827, and alanine 879 each bind methylcob(III)alamin. A B12-binding domain is found at 766–883 (GVVVLATVKG…VHVLDASRSV (118 aa)). The AdoMet activation domain maps to 916 to 1256 (SLKDRKYTSL…LSSILSYDRL (341 aa)). Residues aspartate 966, arginine 1163, and 1218–1219 (YF) each bind S-adenosyl-L-methionine.

Belongs to the vitamin-B12 dependent methionine synthase family. The cofactor is methylcob(III)alamin. Zn(2+) serves as cofactor.

The catalysed reaction is (6S)-5-methyl-5,6,7,8-tetrahydrofolate + L-homocysteine = (6S)-5,6,7,8-tetrahydrofolate + L-methionine. It functions in the pathway amino-acid biosynthesis; L-methionine biosynthesis via de novo pathway; L-methionine from L-homocysteine (MetH route): step 1/1. Its function is as follows. Catalyzes the transfer of a methyl group from methyl-cobalamin to homocysteine, yielding enzyme-bound cob(I)alamin and methionine. Subsequently, remethylates the cofactor using methyltetrahydrofolate. The chain is Methionine synthase (mtr) from Dictyostelium discoideum (Social amoeba).